The following is a 299-amino-acid chain: Biphenyl-2,3-diol 1,2-dioxygenase (299 aa).

VOC domains are found at residues 6-121 (ELGY…IFYG) and 146-267 (GIGH…FGWG). Residues histidine 149, histidine 212, and glutamate 263 each coordinate Fe cation.

This sequence belongs to the extradiol ring-cleavage dioxygenase family. Homooctamer. It depends on Fe(2+) as a cofactor.

It catalyses the reaction biphenyl-2,3-diol + O2 = 2-hydroxy-6-oxo-6-phenylhexa-2,4-dienoate + H(+). It participates in xenobiotic degradation; biphenyl degradation; 2-hydroxy-2,4-pentadienoate and benzoate from biphenyl: step 3/4. The protein is Biphenyl-2,3-diol 1,2-dioxygenase (bphC) of Sphingomonas paucimobilis (Pseudomonas paucimobilis).